The sequence spans 545 residues: Cytochrome P450 monooxygenase 212 (545 aa).

The signal sequence occupies residues 1 to 14; sequence MAAYAWLYCALALG. C486 provides a ligand contact to heme.

The protein belongs to the cytochrome P450 family. Heme is required as a cofactor.

It participates in secondary metabolite biosynthesis. Its function is as follows. Cytochrome P450 monooxygenase that is able to use anthracene and pyrene as substrates for oxidation. This chain is Cytochrome P450 monooxygenase 212, found in Postia placenta (strain ATCC 44394 / Madison 698-R) (Brown rot fungus).